The sequence spans 358 residues: MAVKSLSNSILTPLQKKNRKQIQVWLYSILLLCLAIVLVGGATRLTGSGLSITEWKPIHGVIPPIGVEQWQEEFLKYQQIAQYKMLNRDMTLSAFKVIFWWEWAHRVLGRLVGLVALLGLIWFWAIKHIEKNVLLQLIIVPILIAFQGVVGWWMVASGIGQSNLTSVSQYRLAFHLITACFVIIFVTYLSQGLAEYSEKPASHRVQYFAGWLVVLILIEVYFGALVAGLHAGKVYNTWPLMDGQFIPDGLLQHDPIWLNLFENPLTVQFVHRFFAYILFFVAIIHAFYVQKNIPHSIHARRAFFICVMIAVQALLGIITLLQEVPISLGLIHQSVALAILCFSVAHWRATKGAYRAIE.

The next 8 helical transmembrane spans lie at 22–42 (IQVW…VGGA), 107–127 (VLGR…WAIK), 133–153 (VLLQ…VGWW), 172–192 (LAFH…LSQG), 208–228 (FAGW…LVAG), 269–289 (FVHR…AFYV), 302–322 (AFFI…TLLQ), and 324–344 (VPIS…CFSV). His-271 contributes to the heme binding site. A heme-binding site is contributed by His-332.

The protein belongs to the COX15/CtaA family. Type 2 subfamily. Interacts with CtaB. The cofactor is heme b.

It localises to the cell membrane. It catalyses the reaction Fe(II)-heme o + 2 A + H2O = Fe(II)-heme a + 2 AH2. The protein operates within porphyrin-containing compound metabolism; heme A biosynthesis; heme A from heme O: step 1/1. Functionally, catalyzes the conversion of heme O to heme A by two successive hydroxylations of the methyl group at C8. The first hydroxylation forms heme I, the second hydroxylation results in an unstable dihydroxymethyl group, which spontaneously dehydrates, resulting in the formyl group of heme A. The protein is Heme A synthase of Bartonella henselae (strain ATCC 49882 / DSM 28221 / CCUG 30454 / Houston 1) (Rochalimaea henselae).